The primary structure comprises 255 residues: Indole-3-glycerol phosphate synthase (255 aa).

This sequence belongs to the TrpC family.

The enzyme catalyses 1-(2-carboxyphenylamino)-1-deoxy-D-ribulose 5-phosphate + H(+) = (1S,2R)-1-C-(indol-3-yl)glycerol 3-phosphate + CO2 + H2O. Its pathway is amino-acid biosynthesis; L-tryptophan biosynthesis; L-tryptophan from chorismate: step 4/5. In Streptococcus sanguinis (strain SK36), this protein is Indole-3-glycerol phosphate synthase.